We begin with the raw amino-acid sequence, 73 residues long: Neutrophil elastase 2B (73 aa).

Residues 1 to 73 form the Peptidase S1 domain; that stretch reads IVGGRPARPH…SGGPLVCNGL (73 aa). Ser-64 functions as the Charge relay system in the catalytic mechanism.

It belongs to the peptidase S1 family. Elastase subfamily.

Functionally, may be involved in the degradation of connective tissue in chronic lung disease. This chain is Neutrophil elastase 2B, found in Equus caballus (Horse).